The primary structure comprises 638 residues: Cytoplasmic dynein 1 intermediate chain 2 (638 aa).

2 stretches are compositionally biased toward basic and acidic residues: residues 1–13 and 20–43; these read MSDK…ELER and QIRE…KKEA. Disordered stretches follow at residues 1–135 and 155–214; these read MSDK…GRGP and TYTK…EEKQ. Residue Ser-2 is modified to N-acetylserine. Ser-51 carries the diphosphoserine modification. Phosphoserine is present on residues Ser-51, Ser-73, Trp-81, Pro-84, and Ser-90. The span at 88–97 shows a compositional bias: low complexity; that stretch reads PSSKSVSTPS. The residue at position 95 (Thr-95) is a Phosphothreonine. A phosphoserine mark is found at Ser-97, Ser-101, and Ser-104. A compositionally biased stretch (basic and acidic residues) spans 190–214; the sequence is EKTLKKDEENDSKAPPHELTEEEKQ. 7 WD repeats span residues 277–326, 330–370, 379–420, 429–469, 474–519, 522–562, and 568–607; these read SKHR…TTPE, HCQS…RTPV, AHTH…HPQD, SKAV…AGIS, GHQG…PLYS, DNAD…EVPT, and EGNP…AVPR.

The protein belongs to the dynein intermediate chain family. Homodimer. The cytoplasmic dynein 1 complex consists of two catalytic heavy chains (HCs) and a number of non-catalytic subunits presented by intermediate chains (ICs), light intermediate chains (LICs) and light chains (LCs); the composition seems to vary in respect to the IC, LIC and LC composition. The heavy chain homodimer serves as a scaffold for the probable homodimeric assembly of the respective non-catalytic subunits. The ICs and LICs bind directly to the HC dimer and the LCs assemble on the IC dimer. Interacts with DYNLT3. Interacts with DYNLT1. Interacts (dephosphorylated at Ser-90) with DCTN1. Interacts with BICD2. Interacts with SPEF2. Interacts with CFAP61. In terms of assembly, (Microbial infection) Interacts with human adenovirus 5 hexon protein; this interaction probably allows virus intracellular transport. Post-translationally, the phosphorylation status of Ser-90 appears to be involved in dynactin-dependent target binding. In terms of processing, pyrophosphorylation by 5-diphosphoinositol pentakisphosphate (5-IP7) promotes interaction with DCTN1. Serine pyrophosphorylation is achieved by Mg(2+)-dependent, but enzyme independent transfer of a beta-phosphate from a inositol pyrophosphate to a pre-phosphorylated serine residue.

Its subcellular location is the cytoplasm. It is found in the cytoskeleton. Functionally, acts as one of several non-catalytic accessory components of the cytoplasmic dynein 1 complex that are thought to be involved in linking dynein to cargos and to adapter proteins that regulate dynein function. Cytoplasmic dynein 1 acts as a motor for the intracellular retrograde motility of vesicles and organelles along microtubules. The intermediate chains mediate the binding of dynein to dynactin via its 150 kDa component (p150-glued) DCTN1. Involved in membrane-transport, such as Golgi apparatus, late endosomes and lysosomes. The sequence is that of Cytoplasmic dynein 1 intermediate chain 2 from Homo sapiens (Human).